The primary structure comprises 196 residues: Nucleoside triphosphate pyrophosphatase (196 aa).

Catalysis depends on D73, which acts as the Proton acceptor.

The protein belongs to the Maf family. A divalent metal cation serves as cofactor.

Its subcellular location is the cytoplasm. It carries out the reaction a ribonucleoside 5'-triphosphate + H2O = a ribonucleoside 5'-phosphate + diphosphate + H(+). It catalyses the reaction a 2'-deoxyribonucleoside 5'-triphosphate + H2O = a 2'-deoxyribonucleoside 5'-phosphate + diphosphate + H(+). Nucleoside triphosphate pyrophosphatase. May have a dual role in cell division arrest and in preventing the incorporation of modified nucleotides into cellular nucleic acids. The polypeptide is Nucleoside triphosphate pyrophosphatase (Chlamydia pneumoniae (Chlamydophila pneumoniae)).